Here is a 305-residue protein sequence, read N- to C-terminus: UDP-3-O-acyl-N-acetylglucosamine deacetylase (305 aa).

Residues histidine 79, histidine 238, and aspartate 242 each contribute to the Zn(2+) site. The active-site Proton donor is the histidine 265.

The protein belongs to the LpxC family. Zn(2+) serves as cofactor.

The enzyme catalyses a UDP-3-O-[(3R)-3-hydroxyacyl]-N-acetyl-alpha-D-glucosamine + H2O = a UDP-3-O-[(3R)-3-hydroxyacyl]-alpha-D-glucosamine + acetate. It participates in glycolipid biosynthesis; lipid IV(A) biosynthesis; lipid IV(A) from (3R)-3-hydroxytetradecanoyl-[acyl-carrier-protein] and UDP-N-acetyl-alpha-D-glucosamine: step 2/6. Functionally, catalyzes the hydrolysis of UDP-3-O-myristoyl-N-acetylglucosamine to form UDP-3-O-myristoylglucosamine and acetate, the committed step in lipid A biosynthesis. The chain is UDP-3-O-acyl-N-acetylglucosamine deacetylase from Actinobacillus succinogenes (strain ATCC 55618 / DSM 22257 / CCUG 43843 / 130Z).